Consider the following 217-residue polypeptide: Adapter protein MecA (217 aa).

Belongs to the MecA family. In terms of assembly, homodimer.

Enables the recognition and targeting of unfolded and aggregated proteins to the ClpC protease or to other proteins involved in proteolysis. This chain is Adapter protein MecA, found in Listeria welshimeri serovar 6b (strain ATCC 35897 / DSM 20650 / CCUG 15529 / CIP 8149 / NCTC 11857 / SLCC 5334 / V8).